Here is a 109-residue protein sequence, read N- to C-terminus: MEVKAIHRGARISAQKTRLVADQIRGLPIERALNVLAFSPKKAAVIVKKVVESAIANAEHNEGADIDELKVKSIYIDKATSLKRFTARAKGRGNRIEKQTCHITVTLGN.

This sequence belongs to the universal ribosomal protein uL22 family. As to quaternary structure, part of the 50S ribosomal subunit.

Functionally, this protein binds specifically to 23S rRNA; its binding is stimulated by other ribosomal proteins, e.g. L4, L17, and L20. It is important during the early stages of 50S assembly. It makes multiple contacts with different domains of the 23S rRNA in the assembled 50S subunit and ribosome. In terms of biological role, the globular domain of the protein is located near the polypeptide exit tunnel on the outside of the subunit, while an extended beta-hairpin is found that lines the wall of the exit tunnel in the center of the 70S ribosome. This chain is Large ribosomal subunit protein uL22, found in Ralstonia nicotianae (strain ATCC BAA-1114 / GMI1000) (Ralstonia solanacearum).